The following is a 707-amino-acid chain: Leucine-rich repeat neuronal protein 3 (707 aa).

The N-terminal stretch at 1 to 22 (MKDAPLQIHVLLGLAITALVQA) is a signal peptide. Residues 23 to 69 (GDKKVDCPQLCTCEIRPWFTPRSIYMEASTVDCNDLGLLNFPARLPA) form the LRRNT domain. Over 23 to 626 (GDKKVDCPQL…DGKENGKSHT (604 aa)) the chain is Extracellular. LRR repeat units lie at residues 70–91 (DTQI…TDFP), 93–114 (NLTG…NVQK), 117–138 (QLLS…CLYG), 141–162 (NLQE…AFVG), 165–186 (NLLR…WFEA), 189–210 (NLEI…NFQP), 213–234 (KLRS…ALVG), 237–258 (NLES…ALQK), 261–282 (NLKF…DFSN), 285–304 (HLKE…DSLA), 310–332 (DLRK…AFFR), and 335–358 (KLES…ESLP). N-linked (GlcNAc...) asparagine glycosylation is found at Asn-93 and Asn-103. Asn-223 is a glycosylation site (N-linked (GlcNAc...) asparagine). One can recognise an LRRCT domain in the interval 368–421 (NPIRCDCVIRWINMNKTNIRFMEPDSLFCVDPPEFQGQNVRQVHFRDMMEICLP). Asn-382 is a glycosylation site (N-linked (GlcNAc...) asparagine). The 94-residue stretch at 421 to 514 (PLIAPESFPS…DLKSIMIKVG (94 aa)) folds into the Ig-like C2-type domain. A disulfide bond links Cys-444 and Cys-496. Asn-522, Asn-579, and Asn-608 each carry an N-linked (GlcNAc...) asparagine glycan. The 92-residue stretch at 523–614 (GSLNIKIRDI…QCVNVTTKSL (92 aa)) folds into the Fibronectin type-III domain. The helical transmembrane segment at 627–647 (VFVACVGGLLGIIGVMCLFGC) threads the bilayer. Topologically, residues 648-707 (VSQEGNCENEHSYTVNHCHKPTLAFSELYPPLINLWESSKEKPASLEVKATAIGVPTSMS) are cytoplasmic.

The protein resides in the membrane. The protein is Leucine-rich repeat neuronal protein 3 (Lrrn3) of Rattus norvegicus (Rat).